We begin with the raw amino-acid sequence, 265 residues long: 5'-nucleotidase SurE (265 aa).

A divalent metal cation contacts are provided by aspartate 8, aspartate 9, serine 40, and asparagine 98.

It belongs to the SurE nucleotidase family. The cofactor is a divalent metal cation.

It is found in the cytoplasm. It catalyses the reaction a ribonucleoside 5'-phosphate + H2O = a ribonucleoside + phosphate. Its function is as follows. Nucleotidase that shows phosphatase activity on nucleoside 5'-monophosphates. The sequence is that of 5'-nucleotidase SurE from Thermosynechococcus vestitus (strain NIES-2133 / IAM M-273 / BP-1).